We begin with the raw amino-acid sequence, 368 residues long: Zinc finger protein 24 (368 aa).

A Glycyl lysine isopeptide (Lys-Gly) (interchain with G-Cter in SUMO2) cross-link involves residue lysine 22. Residue lysine 27 forms a Glycyl lysine isopeptide (Lys-Gly) (interchain with G-Cter in SUMO1); alternate linkage. Lysine 27 participates in a covalent cross-link: Glycyl lysine isopeptide (Lys-Gly) (interchain with G-Cter in SUMO2); alternate. In terms of domain architecture, SCAN box spans 52–134 (RQRFRQFGYQ…TVLEDLESEL (83 aa)). Phosphoserine occurs at positions 132 and 142. Residues lysine 147, lysine 177, and lysine 236 each participate in a glycyl lysine isopeptide (Lys-Gly) (interchain with G-Cter in SUMO2) cross-link. The C2H2-type 1 zinc-finger motif lies at 251-273 (HICDECGKHFSQGSALILHQRIH). A necessary and sufficient for nuclear localization region spans residues 251-301 (HICDECGKHFSQGSALILHQRIHSGEKPYGCVECGKAFSRSSILVQHQRVH). At serine 274 the chain carries Phosphoserine. Residues lysine 277 and lysine 286 each participate in a glycyl lysine isopeptide (Lys-Gly) (interchain with G-Cter in SUMO2) cross-link. 3 consecutive C2H2-type zinc fingers follow at residues 279–301 (YGCVECGKAFSRSSILVQHQRVH), 307–329 (YKCLECGKAFSQNSGLINHQRIH), and 335–357 (YECVQCGKSYSQSSNLFRHQRRH). The residue at position 292 (serine 292) is a Phosphoserine. The residue at position 335 (tyrosine 335) is a Phosphotyrosine. Glycyl lysine isopeptide (Lys-Gly) (interchain with G-Cter in SUMO2) cross-links involve residues lysine 361 and lysine 367.

It belongs to the krueppel C2H2-type zinc-finger protein family. Sumoylated.

The protein localises to the nucleus. In terms of biological role, transcription factor required for myelination of differentiated oligodendrocytes. Required for the conversion of oligodendrocytes from the premyelinating to the myelinating state. In the developing central nervous system (CNS), involved in the maintenance in the progenitor stage by promoting the cell cycle. Specifically binds to the 5'-TCAT-3' DNA sequence. Has transcription repressor activity in vitro. This chain is Zinc finger protein 24 (Znf24), found in Rattus norvegicus (Rat).